A 441-amino-acid polypeptide reads, in one-letter code: Serine carboxypeptidase-like 2 (441 aa).

The N-terminal stretch at 1-29 (MANKYFSSVLKSLLLLLHLVFLSKQHVDS) is a signal peptide. 3 disulfides stabilise this stretch: C88–C331, C252–C266, and C290–C297. The N-linked (GlcNAc...) asparagine glycan is linked to N109. Residue S184 is part of the active site. A glycan (N-linked (GlcNAc...) asparagine) is linked at N350. D366 is an active-site residue. An N-linked (GlcNAc...) asparagine glycan is attached at N382. Residue H419 is part of the active site.

The protein belongs to the peptidase S10 family. In terms of tissue distribution, expressed in seedlings and roots.

The protein resides in the secreted. In terms of biological role, probable carboxypeptidase. This chain is Serine carboxypeptidase-like 2 (SCPL2), found in Arabidopsis thaliana (Mouse-ear cress).